The primary structure comprises 201 residues: U1 small nuclear ribonucleoprotein C (201 aa).

The Matrin-type zinc finger occupies 4–36; that stretch reads YYCEYCDIYLTHSSPVGRRQHNQGRKHISAKIE. Over residues 137–154 the composition is skewed to low complexity; it reads IQKPYNNFDNKNNNYNNK. A disordered region spans residues 137-176; sequence IQKPYNNFDNKNNNYNNKPITNSSYKNDKQDYRNNNENND.

The protein belongs to the U1 small nuclear ribonucleoprotein C family. In terms of assembly, U1 snRNP is composed of the 7 core Sm proteins B/B', D1, D2, D3, E, F and G that assemble in a heptameric protein ring on the Sm site of the small nuclear RNA to form the core snRNP, and at least 3 U1 snRNP-specific proteins U1-70K, U1-A and U1-C. U1-C interacts with U1 snRNA and the 5' splice-site region of the pre-mRNA.

The protein localises to the nucleus. Component of the spliceosomal U1 snRNP, which is essential for recognition of the pre-mRNA 5' splice-site and the subsequent assembly of the spliceosome. U1-C is directly involved in initial 5' splice-site recognition for both constitutive and regulated alternative splicing. The interaction with the 5' splice-site seems to precede base-pairing between the pre-mRNA and the U1 snRNA. Stimulates commitment or early (E) complex formation by stabilizing the base pairing of the 5' end of the U1 snRNA and the 5' splice-site region. This is U1 small nuclear ribonucleoprotein C from Plasmodium yoelii yoelii.